The chain runs to 70 residues: Protein SlyX homolog (70 aa).

It belongs to the SlyX family.

The polypeptide is Protein SlyX homolog (Pseudoalteromonas atlantica (strain T6c / ATCC BAA-1087)).